The primary structure comprises 276 residues: MDIRYEVGPKDFKTYTTEEMREAFLVESLFEEGALHLSYSHYDRLIIGGAVPSHEAIALDAGDALKTDYFLERRELAVINIGGKGTVTVGKDTYKMAKRDCLYVGRGNEHVEFASNDPQQPARFYLVSATAHQTYPTKLAPIGEAQPTKLGSDAESNNRTIYKYIHKDGIESCQLMVGMTLLEPNNMWNTMPAHLHDRRMEAYLYFDMEEDTRVFHFMGQPQETRHLVIKNEQAVISPPWSIHSGVGTSNYTFIWAMAGENYTFTDMDTVAMEELK.

H194, H196, E201, and H243 together coordinate Zn(2+).

It belongs to the KduI family. Zn(2+) serves as cofactor.

The catalysed reaction is 5-dehydro-4-deoxy-D-glucuronate = 3-deoxy-D-glycero-2,5-hexodiulosonate. It functions in the pathway glycan metabolism; pectin degradation; 2-dehydro-3-deoxy-D-gluconate from pectin: step 4/5. Catalyzes the isomerization of 5-dehydro-4-deoxy-D-glucuronate to 3-deoxy-D-glycero-2,5-hexodiulosonate. This is 4-deoxy-L-threo-5-hexosulose-uronate ketol-isomerase from Shouchella clausii (strain KSM-K16) (Alkalihalobacillus clausii).